Reading from the N-terminus, the 270-residue chain is 4-hydroxy-tetrahydrodipicolinate reductase (270 aa).

NAD(+)-binding positions include glycine 9–methionine 14 and glutamate 35. Arginine 36 is a binding site for NADP(+). Residues glycine 99–threonine 101 and alanine 123–tyrosine 126 each bind NAD(+). Catalysis depends on histidine 156, which acts as the Proton donor/acceptor. Histidine 157 is a binding site for (S)-2,3,4,5-tetrahydrodipicolinate. The active-site Proton donor is lysine 160. Glycine 166–threonine 167 contributes to the (S)-2,3,4,5-tetrahydrodipicolinate binding site.

Belongs to the DapB family.

It localises to the cytoplasm. The catalysed reaction is (S)-2,3,4,5-tetrahydrodipicolinate + NAD(+) + H2O = (2S,4S)-4-hydroxy-2,3,4,5-tetrahydrodipicolinate + NADH + H(+). It catalyses the reaction (S)-2,3,4,5-tetrahydrodipicolinate + NADP(+) + H2O = (2S,4S)-4-hydroxy-2,3,4,5-tetrahydrodipicolinate + NADPH + H(+). Its pathway is amino-acid biosynthesis; L-lysine biosynthesis via DAP pathway; (S)-tetrahydrodipicolinate from L-aspartate: step 4/4. Functionally, catalyzes the conversion of 4-hydroxy-tetrahydrodipicolinate (HTPA) to tetrahydrodipicolinate. This Histophilus somni (strain 2336) (Haemophilus somnus) protein is 4-hydroxy-tetrahydrodipicolinate reductase.